The sequence spans 218 residues: Large ribosomal subunit protein uL3 (218 aa).

Disordered regions lie at residues 128-167 and 199-218; these read FSRG…RMGG and SLLN…QGGK.

This sequence belongs to the universal ribosomal protein uL3 family. Part of the 50S ribosomal subunit. Forms a cluster with proteins L14 and L19.

One of the primary rRNA binding proteins, it binds directly near the 3'-end of the 23S rRNA, where it nucleates assembly of the 50S subunit. The sequence is that of Large ribosomal subunit protein uL3 from Prochlorococcus marinus (strain NATL2A).